Consider the following 99-residue polypeptide: UPF0122 protein UU142 (99 aa).

Belongs to the UPF0122 family.

Functionally, might take part in the signal recognition particle (SRP) pathway. This is inferred from the conservation of its genetic proximity to ftsY/ffh. May be a regulatory protein. The chain is UPF0122 protein UU142 from Ureaplasma parvum serovar 3 (strain ATCC 700970).